A 102-amino-acid polypeptide reads, in one-letter code: Probable endoribonuclease MazF2 (102 aa).

It belongs to the PemK/MazF family. As to quaternary structure, forms a complex with cognate antitoxin MazE2.

Toxic component of a type II toxin-antitoxin (TA) system. Acts as an endoribonuclease. Neutralized by coexpression with cognate antitoxin MazE2. This Mycobacterium tuberculosis (strain CDC 1551 / Oshkosh) protein is Probable endoribonuclease MazF2 (mazF2).